Reading from the N-terminus, the 182-residue chain is Protein YIPF6 homolog (182 aa).

The Cytoplasmic segment spans residues 1 to 45 (MIESENPNTLDEPVIQTILRDLKMIGFKLYHVILPRGNAANVLRD). The chain crosses the membrane as a helical span at residues 46-66 (WDLWGPLILCLVMAIFLSISA). Over 67-70 (EEQK) the chain is Lumenal. Residues 71-91 (ALEFTIVFVVVWCGAAIVTVN) traverse the membrane as a helical segment. Residues 92–104 (GQLLCGNISFFQS) are Cytoplasmic-facing. The helical transmembrane segment at 105-125 (VCILGYCIFPLTIATIIIWII) threads the bilayer. The Lumenal segment spans residues 126 to 133 (QNFTMIVK). A helical transmembrane segment spans residues 134–154 (LPIVGGAWFWSSFASYGFLGS). Residues 155 to 161 (SVPESRR) lie on the Cytoplasmic side of the membrane. The chain crosses the membrane as a helical span at residues 162-182 (LLAVYPVLLFYLVIAWLVVVQ).

It belongs to the YIP1 family.

Its subcellular location is the golgi apparatus membrane. In Dictyostelium discoideum (Social amoeba), this protein is Protein YIPF6 homolog (yipf6).